A 180-amino-acid chain; its full sequence is Adenine phosphoribosyltransferase (180 aa).

The protein belongs to the purine/pyrimidine phosphoribosyltransferase family. In terms of assembly, homodimer.

The protein resides in the cytoplasm. It carries out the reaction AMP + diphosphate = 5-phospho-alpha-D-ribose 1-diphosphate + adenine. Its pathway is purine metabolism; AMP biosynthesis via salvage pathway; AMP from adenine: step 1/1. Catalyzes a salvage reaction resulting in the formation of AMP, that is energically less costly than de novo synthesis. The polypeptide is Adenine phosphoribosyltransferase (Butyrivibrio fibrisolvens).